Here is a 338-residue protein sequence, read N- to C-terminus: Mitoferrin-1 (338 aa).

Positions 1 to 42 (MELRSGSVGSQAVARRMDGDSRDGGGGKDATGSEDYENLPTS) are disordered. Basic and acidic residues predominate over residues 15–26 (RRMDGDSRDGGG). Solcar repeat units lie at residues 43–131 (ASVS…MKRT), 141–225 (NSHL…LQEQ), and 232–326 (YNPQ…FKYF). Helical transmembrane passes span 45-64 (VSTHMTAGAMAGILEHSVMY), 106-125 (GVNVMIMGAGPAHAMYFACY), 143-162 (HLANGIAGSMATLLHDAVMN), 200-219 (SYTTQLTMNIPFQSIHFITY), 234-253 (PQSHIISGGLAGALAAAATT), and 301-320 (GIQARVIYQMPSTAISWSVY).

Belongs to the mitochondrial carrier (TC 2.A.29) family. In terms of assembly, interacts with ACB10; this interaction stabilizes SLC25A37 and enhances the function of SLC25A37 to import mitochondrial iron during erythroid differentiation.

It is found in the mitochondrion inner membrane. It carries out the reaction Fe(2+)(in) = Fe(2+)(out). Mitochondrial iron transporter that specifically mediates iron uptake in developing erythroid cells, thereby playing an essential role in heme biosynthesis. This is Mitoferrin-1 (SLC25A37) from Homo sapiens (Human).